Reading from the N-terminus, the 626-residue chain is Protein PCF11 (626 aa).

Residues 1–130 (MDHDTEVIVK…PLFEGSALEK (130 aa)) are interaction with RBP1 CTD (CID). The region spanning 4-139 (DTEVIVKDFN…KIEQFLIKAS (136 aa)) is the CID domain. The disordered stretch occupies residues 263–286 (SYTQNSNSAIPLFGNNSDTTNQQN).

Component of the CFIA complex, which is composed of RNA14, RNA15, PCF11 and CLP1. Interacts with RNA14, RNA15 and RTT103. Interacts directly with the phosphorylated CTD domain of RPB1/RNA polymerase II.

Its subcellular location is the nucleus. In terms of biological role, component of the cleavage factor IA (CFIA) complex, which is involved in the endonucleolytic cleavage during polyadenylation-dependent pre-mRNA 3'-end formation and cooperates with cleavage factor NAB4/CFIB and the cleavage and polyadenylation factor (CPF) complex. Independently involved in RNA polymerase II transcript termination. Binds RNA. Seems to bridge RNA polymerase II and the native transcript and may be involved in dismantling the RNA polymerase II elongation complex. The polypeptide is Protein PCF11 (PCF11) (Saccharomyces cerevisiae (strain ATCC 204508 / S288c) (Baker's yeast)).